The chain runs to 145 residues: Histone H2B.7 (145 aa).

A compositionally biased stretch (basic and acidic residues) spans 1–30 (MAPKAEKKPAEKKPVEEKSKAEKAPAEKKP). The segment at 1 to 53 (MAPKAEKKPAEKKPVEEKSKAEKAPAEKKPKAGKKLPKEAGAGGDKKKKMKKK) is disordered. The residue at position 2 (alanine 2) is a N,N,N-trimethylalanine; alternate. Position 2 is a n,N-dimethylalanine; alternate (alanine 2). Position 2 is an N-methylalanine; alternate (alanine 2). Lysine 4 is modified (N6-methyllysine; partial). Lysine 7 and lysine 12 each carry N6-acetyllysine. Lysine 13 is subject to N6,N6-dimethyllysine. N6-acetyllysine is present on residues lysine 23, lysine 28, and lysine 34. Lysine 35 carries the post-translational modification N6-acetyllysine; partial. Lysine 141 is covalently cross-linked (Glycyl lysine isopeptide (Lys-Gly) (interchain with G-Cter in ubiquitin)).

It belongs to the histone H2B family. As to quaternary structure, the nucleosome is a histone octamer containing two molecules each of H2A, H2B, H3 and H4 assembled in one H3-H4 heterotetramer and two H2A-H2B heterodimers. The octamer wraps approximately 147 bp of DNA. Post-translationally, can be acetylated to form H2BK6ac, H2BK11ac, H2BK22ac, H2BK27ac H2BK33ac and H2BK34ac. In terms of processing, mono-, di- or trimethylated at the N-terminus to form H2BA1me1/2/3. H2BA1me2 and H2BA1me3 may be methylated and/or acetylated to form H2BA1me2K3me1, H2BA1me2K3me1K6ac, H2BA1me2K6ac H2BA1me3K6ac, H2BA1me3K6acK11ac and H2BA1me2K3me1K6acK11ac. Monoubiquitinated by BRE1 to form H2BK143ub1 and deubiquitinated by UBP26. Required for heterochromatic histone H3 di- and trimethylation at H3K4me. May give a specific tag for epigenetic transcriptional activation.

The protein resides in the nucleus. Its subcellular location is the chromosome. In terms of biological role, core component of nucleosome. Nucleosomes wrap and compact DNA into chromatin, limiting DNA accessibility to the cellular machineries which require DNA as a template. Histones thereby play a central role in transcription regulation, DNA repair, DNA replication and chromosomal stability. DNA accessibility is regulated via a complex set of post-translational modifications of histones, also called histone code, and nucleosome remodeling. The polypeptide is Histone H2B.7 (Arabidopsis thaliana (Mouse-ear cress)).